Reading from the N-terminus, the 591-residue chain is V-type ATP synthase alpha chain (591 aa).

233 to 240 (GPFGAGKT) serves as a coordination point for ATP.

It belongs to the ATPase alpha/beta chains family.

It catalyses the reaction ATP + H2O + 4 H(+)(in) = ADP + phosphate + 5 H(+)(out). In terms of biological role, produces ATP from ADP in the presence of a proton gradient across the membrane. The V-type alpha chain is a catalytic subunit. The polypeptide is V-type ATP synthase alpha chain (Streptococcus pyogenes serotype M28 (strain MGAS6180)).